A 645-amino-acid chain; its full sequence is Translation factor GUF1 homolog, mitochondrial (645 aa).

Residues 40-215 (EKIRNFGIVA…AIVERVPAPT (176 aa)) form the tr-type G domain. GTP contacts are provided by residues 49–56 (AHVDHGKS), 108–112 (DTPGH), and 162–165 (NKID).

The protein belongs to the TRAFAC class translation factor GTPase superfamily. Classic translation factor GTPase family. LepA subfamily.

Its subcellular location is the mitochondrion inner membrane. The enzyme catalyses GTP + H2O = GDP + phosphate + H(+). Functionally, promotes mitochondrial protein synthesis. May act as a fidelity factor of the translation reaction, by catalyzing a one-codon backward translocation of tRNAs on improperly translocated ribosomes. Binds to mitochondrial ribosomes in a GTP-dependent manner. This Caenorhabditis briggsae protein is Translation factor GUF1 homolog, mitochondrial.